The sequence spans 439 residues: Perilipin-3 (439 aa).

Residues Met1–Glu19 are compositionally biased toward low complexity. A disordered region spans residues Met1 to Val26. Lys66 carries the N6-acetyllysine modification. Ser92 bears the Phosphoserine mark. A Glycyl lysine isopeptide (Lys-Gly) (interchain with G-Cter in SUMO1) cross-link involves residue Lys123. Position 131 is a phosphoserine (Ser131). At Thr175 the chain carries Phosphothreonine. Ser180 and Ser184 each carry phosphoserine. Thr221 carries the phosphothreonine modification. Residues Ser222 and Ser246 each carry the phosphoserine modification. Coiled coils occupy residues Arg254 to Ser282 and Ala358 to Met381. Residue Tyr256 is modified to Phosphotyrosine.

The protein belongs to the perilipin family. In terms of assembly, homooligomer. Interacts with M6PR (via the cytoplasmic domain). Interacts with IGF2R (via the cytoplasmic domain). Post-translationally, phosphorylation at Tyr-256 by isoform 1 of CHKA (CHKalpha2) promotes dissociation from lipid droplets: dissociation is followed by recruitment of autophagosome machinery to lipid droplets and subsequent lipid droplet lipolysis.

The protein localises to the lipid droplet. The protein resides in the endosome membrane. Its subcellular location is the cytoplasm. In terms of biological role, structural component of lipid droplets, which is required for the formation and maintenance of lipid storage droplets. Required for the transport of mannose 6-phosphate receptors (MPR) from endosomes to the trans-Golgi network. The polypeptide is Perilipin-3 (PLIN3) (Sus scrofa (Pig)).